Here is a 66-residue protein sequence, read N- to C-terminus: Large ribosomal subunit protein uL29 (66 aa).

This sequence belongs to the universal ribosomal protein uL29 family.

This Nitrosococcus oceani (strain ATCC 19707 / BCRC 17464 / JCM 30415 / NCIMB 11848 / C-107) protein is Large ribosomal subunit protein uL29.